We begin with the raw amino-acid sequence, 213 residues long: Ras-related protein Rab-39B (213 aa).

Serine 17, glycine 20, lysine 21, serine 22, cysteine 23, serine 37, and threonine 40 together coordinate GTP. Position 22 (serine 22) interacts with Mg(2+). The segment at 35 to 43 is switch-I; it reads QVSDPTVGV. Mg(2+) contacts are provided by threonine 40 and aspartate 64. Positions 67, 123, 124, 126, 154, and 155 each coordinate GTP. Positions 67–83 are switch-II; that stretch reads GQERFRSITRAYYRNSV. Residue serine 201 is modified to Phosphoserine. Residues cysteine 211 and cysteine 213 are each lipidated (S-geranylgeranyl cysteine). Cysteine 213 carries the post-translational modification Cysteine methyl ester.

The protein belongs to the small GTPase superfamily. Rab family. Interacts (GDP-bound) with C9orf72; C9orf72 in complex with SMCR8 acts as a GEF for RAB39B. Interacts (in GTP-bound form) with PICK1 (via PDZ domain); a PICK1 homodimer may allow simultaneous association of RAB39B and GRIA2 to PICK1 which is involved in GRIA2 trafficking. Interacts with isoform c of RASSF1; the interaction is strong. Interacts with isoform a of RASSF1; the interaction is weak. Interacts with the DLG4/PSD-95. Interacts (GTP-bound) with HOPS complex components VPS39 and VPS41. It depends on Mg(2+) as a cofactor.

Its subcellular location is the cell membrane. It is found in the cytoplasmic vesicle membrane. It localises to the golgi apparatus. The protein resides in the cytoplasmic vesicle. The protein localises to the autophagosome membrane. Its subcellular location is the autolysosome membrane. It catalyses the reaction GTP + H2O = GDP + phosphate + H(+). With respect to regulation, regulated by guanine nucleotide exchange factors (GEFs) including C9orf72-SMCR8 complex, which promote the exchange of bound GDP for free GTP. Regulated by GTPase activating proteins (GAPs) which increase the GTP hydrolysis activity. Inhibited by GDP dissociation inhibitors (GDIs). In terms of biological role, the small GTPases Rab are key regulators of intracellular membrane trafficking, from the formation of transport vesicles to their fusion with membranes. Rabs cycle between an inactive GDP-bound form and an active GTP-bound form that is able to recruit to membranes different sets of downstream effectors directly responsible for vesicle formation, movement, tethering and fusion. RAB39B is involved in autophagy and may function in autophagosome formation. Binds downstream effector PICK1 to ensure selectively GRIA2 exit from the endoplasmic reticulum to the Golgi and to regulate AMPAR composition at the post-synapses and thus synaptic transmission. May regulate the homeostasis of SNCA/alpha-synuclein. The polypeptide is Ras-related protein Rab-39B (RAB39B) (Bos taurus (Bovine)).